The sequence spans 389 residues: 5-hydroxytryptamine receptor 1B (389 aa).

The interval 1–27 is disordered; the sequence is MEDAGTPCAPPPPAGSQTGAPPANLSS. At 1-45 the chain is on the extracellular side; sequence MEDAGTPCAPPPPAGSQTGAPPANLSSAPHNCSAEGYIYQDSIAL. The segment covering 15-27 has biased composition (polar residues); that stretch reads GSQTGAPPANLSS. N-linked (GlcNAc...) asparagine glycans are attached at residues Asn24 and Asn31. A helical membrane pass occupies residues 46–71; the sequence is PWKVLLAILLALLTLATTLSNAFVIA. Residues 72-85 lie on the Cytoplasmic side of the membrane; sequence TVYRTRKLHTPANY. The helical transmembrane segment at 86 to 110 threads the bilayer; it reads LIASLAVTDLLVSILVMPISTMYAV. The Extracellular portion of the chain corresponds to 111–118; it reads TGRWTLGQ. The chain crosses the membrane as a helical span at residues 119–144; sequence VVCDLWLSSDITCCTASILHLCVIAL. Cys121 and Cys198 form a disulfide bridge. 2 residues coordinate ergotamine: Asp128 and Thr133. The DRY motif; important for ligand-induced conformation changes and signaling signature appears at 145-147; it reads DRY. Over 145-164 the chain is Cytoplasmic; that stretch reads DRYWAITDAVEYSAKRTPKR. A helical membrane pass occupies residues 165–183; the sequence is AAVMIALVWVFSISISLPP. Topologically, residues 184–204 are extracellular; sequence FFWRQAKAEEEVSDCVVNTDH. Val200 provides a ligand contact to ergotamine. Residues 205 to 228 traverse the membrane as a helical segment; the sequence is ILYTVYSTVGAFYFPTLLLIALYG. Residues 229–314 are Cytoplasmic-facing; that stretch reads RIYVEARSRI…AARERKATKT (86 aa). The span at 258-271 shows a compositional bias: polar residues; that stretch reads DSPGSTSSVTSVNS. Residues 258–281 are disordered; it reads DSPGSTSSVTSVNSRAPDVPSESG. Residues 315-336 traverse the membrane as a helical segment; it reads LGIILGAFIVCWLPFFIISLVM. Residues 337–346 lie on the Extracellular side of the membrane; sequence PICKDACWFH. Residues 347–369 form a helical membrane-spanning segment; sequence LAIFDFFTWLGYLNSLINPIIYT. The short motif at 364 to 368 is the NPxxY motif; important for ligand-induced conformation changes and signaling element; that stretch reads NPIIY. Residues 370 to 389 lie on the Cytoplasmic side of the membrane; it reads MSNEDFKQAFHKLIRFKCAS. Cys387 carries the S-palmitoyl cysteine lipid modification.

It belongs to the G-protein coupled receptor 1 family. As to quaternary structure, homodimer. Heterodimer with HTR1D. Post-translationally, phosphorylated. Desensitization of the receptor may be mediated by its phosphorylation. Palmitoylated.

It localises to the cell membrane. G-protein coupled receptor for 5-hydroxytryptamine (serotonin). Also functions as a receptor for ergot alkaloid derivatives, various anxiolytic and antidepressant drugs and other psychoactive substances, such as lysergic acid diethylamide (LSD). Ligand binding causes a conformation change that triggers signaling via guanine nucleotide-binding proteins (G proteins) and modulates the activity of downstream effectors, such as adenylate cyclase. HTR1B is coupled to G(i)/G(o) G alpha proteins and mediates inhibitory neurotransmission by inhibiting adenylate cyclase activity. Arrestin family members inhibit signaling via G proteins and mediate activation of alternative signaling pathways. Regulates the release of 5-hydroxytryptamine, dopamine and acetylcholine in the brain, and thereby affects neural activity, nociceptive processing, pain perception, mood and behavior. Besides, plays a role in vasoconstriction of cerebral arteries. This is 5-hydroxytryptamine receptor 1B (HTR1B) from Vulpes vulpes (Red fox).